The primary structure comprises 169 residues: Ribosome maturation factor RimP (169 aa).

It belongs to the RimP family.

It localises to the cytoplasm. Required for maturation of 30S ribosomal subunits. The chain is Ribosome maturation factor RimP from Coprothermobacter proteolyticus (strain ATCC 35245 / DSM 5265 / OCM 4 / BT).